The following is a 91-amino-acid chain: Probable Fe(2+)-trafficking protein (91 aa).

This sequence belongs to the Fe(2+)-trafficking protein family.

In terms of biological role, could be a mediator in iron transactions between iron acquisition and iron-requiring processes, such as synthesis and/or repair of Fe-S clusters in biosynthetic enzymes. The polypeptide is Probable Fe(2+)-trafficking protein (Burkholderia thailandensis (strain ATCC 700388 / DSM 13276 / CCUG 48851 / CIP 106301 / E264)).